We begin with the raw amino-acid sequence, 245 residues long: Octopine transport system permease protein OccM (245 aa).

The next 5 membrane-spanning stretches (helical) occupy residues 12-32 (FIAL…SIAV), 57-77 (FYIF…IYYG), 96-116 (AYWC…AEIM), 163-183 (VLMV…ITGI), and 199-219 (ACAG…FALI). The ABC transmembrane type-1 domain maps to 19-216 (IPLALKLAVF…TMNFIAARLF (198 aa)).

The protein belongs to the binding-protein-dependent transport system permease family. HisMQ subfamily.

It localises to the cell inner membrane. In terms of biological role, component of the octopine active transport system probably consisting of four subunits: Q, M, P and T. The chain is Octopine transport system permease protein OccM (occM) from Rhizobium meliloti (Ensifer meliloti).